The chain runs to 363 residues: Guanine nucleotide-binding protein alpha-11 subunit (363 aa).

The 338-residue stretch at 26–363 (KMLKILLLGG…KISMEKVGFM (338 aa)) folds into the G-alpha domain. The interval 29-42 (KILLLGGPECGKST) is G1 motif. GTP contacts are provided by residues 34-41 (GGPECGKS), 172-178 (LRARVPT), 197-201 (DVGGQ), 276-279 (NKID), and Ala335. 2 residues coordinate Mg(2+): Ser41 and Thr178. The interval 170-178 (DVLRARVPT) is G2 motif. Positions 193 to 202 (LRMVDVGGQR) are G3 motif. The interval 272–279 (ILFLNKID) is G4 motif. Residues 333 to 338 (TNATDT) form a G5 motif region.

Belongs to the G-alpha family. As to quaternary structure, g proteins are composed of 3 units; alpha, beta and gamma. The alpha chain contains the guanine nucleotide binding site. Expressed in ADL and ASH neurons.

Guanine nucleotide-binding proteins (G proteins) are involved as modulators or transducers in various transmembrane signaling systems. Mediates the transduction of food and serotonin signals, which modulates the avoidance response to the odorant octanol. Has a role in lifespan to promote longevity. The polypeptide is Guanine nucleotide-binding protein alpha-11 subunit (gpa-11) (Caenorhabditis elegans).